A 627-amino-acid polypeptide reads, in one-letter code: Zinc finger MYM-type protein 5 (627 aa).

The disordered stretch occupies residues Met-1–Arg-23. The span at Gly-12–Arg-23 shows a compositional bias: polar residues. A Glycyl lysine isopeptide (Lys-Gly) (interchain with G-Cter in SUMO2) cross-link involves residue Lys-59. The segment at Asp-91–Asn-123 is disordered. Residues Lys-137 and Lys-195 each participate in a glycyl lysine isopeptide (Lys-Gly) (interchain with G-Cter in SUMO2) cross-link. An MYM-type 1 zinc finger spans residues His-234 to Thr-268. Residues Gln-280–Ile-319 form an MYM-type 2; degenerate zinc finger. 2 consecutive MYM-type zinc fingers follow at residues His-326–Tyr-354 and Lys-370–Asn-396. The disordered stretch occupies residues Glu-405–Glu-429. Residues Lys-408, Lys-427, and Lys-517 each participate in a glycyl lysine isopeptide (Lys-Gly) (interchain with G-Cter in SUMO2) cross-link.

In terms of assembly, interacts (via N-terminal 120 amino acid region) with ETV5 (via C-terminal).

It localises to the nucleus. Its function is as follows. Functions as a transcriptional regulator. The chain is Zinc finger MYM-type protein 5 (Zmym5) from Mus musculus (Mouse).